We begin with the raw amino-acid sequence, 317 residues long: Acetyl-coenzyme A carboxylase carboxyl transferase subunit alpha (317 aa).

The CoA carboxyltransferase C-terminal domain maps to 37 to 292 (RLEKKAEKLR…RICLKKHLDD (256 aa)).

The protein belongs to the AccA family. Acetyl-CoA carboxylase is a heterohexamer composed of biotin carboxyl carrier protein (AccB), biotin carboxylase (AccC) and two subunits each of ACCase subunit alpha (AccA) and ACCase subunit beta (AccD).

Its subcellular location is the cytoplasm. It carries out the reaction N(6)-carboxybiotinyl-L-lysyl-[protein] + acetyl-CoA = N(6)-biotinyl-L-lysyl-[protein] + malonyl-CoA. Its pathway is lipid metabolism; malonyl-CoA biosynthesis; malonyl-CoA from acetyl-CoA: step 1/1. Functionally, component of the acetyl coenzyme A carboxylase (ACC) complex. First, biotin carboxylase catalyzes the carboxylation of biotin on its carrier protein (BCCP) and then the CO(2) group is transferred by the carboxyltransferase to acetyl-CoA to form malonyl-CoA. This chain is Acetyl-coenzyme A carboxylase carboxyl transferase subunit alpha, found in Syntrophotalea carbinolica (strain DSM 2380 / NBRC 103641 / GraBd1) (Pelobacter carbinolicus).